We begin with the raw amino-acid sequence, 214 residues long: Cytochrome c biogenesis ATP-binding export protein CcmA (214 aa).

An ABC transporter domain is found at 12-214 (LAARALAFSR…TRMLTLEAAA (203 aa)). 44–51 (GDNGAGKT) provides a ligand contact to ATP.

The protein belongs to the ABC transporter superfamily. CcmA exporter (TC 3.A.1.107) family. The complex is composed of two ATP-binding proteins (CcmA) and two transmembrane proteins (CcmB).

The protein resides in the cell inner membrane. The enzyme catalyses heme b(in) + ATP + H2O = heme b(out) + ADP + phosphate + H(+). In terms of biological role, part of the ABC transporter complex CcmAB involved in the biogenesis of c-type cytochromes; once thought to export heme, this seems not to be the case, but its exact role is uncertain. Responsible for energy coupling to the transport system. In Xanthomonas campestris pv. campestris (strain 8004), this protein is Cytochrome c biogenesis ATP-binding export protein CcmA.